The following is a 179-amino-acid chain: Large ribosomal subunit protein uL6 (179 aa).

The protein belongs to the universal ribosomal protein uL6 family. Part of the 50S ribosomal subunit.

Its function is as follows. This protein binds to the 23S rRNA, and is important in its secondary structure. It is located near the subunit interface in the base of the L7/L12 stalk, and near the tRNA binding site of the peptidyltransferase center. This is Large ribosomal subunit protein uL6 from Nocardioides sp. (strain ATCC BAA-499 / JS614).